The primary structure comprises 153 residues: Transcriptional repressor NrdR (153 aa).

Residues methionine 1–glycine 22 form a disordered region. Residues cysteine 3–cysteine 34 fold into a zinc finger. The 91-residue stretch at leucine 49–valine 139 folds into the ATP-cone domain.

It belongs to the NrdR family. Requires Zn(2+) as cofactor.

Its function is as follows. Negatively regulates transcription of bacterial ribonucleotide reductase nrd genes and operons by binding to NrdR-boxes. The chain is Transcriptional repressor NrdR from Halalkalibacterium halodurans (strain ATCC BAA-125 / DSM 18197 / FERM 7344 / JCM 9153 / C-125) (Bacillus halodurans).